The primary structure comprises 918 residues: Sarcosine dehydrogenase, mitochondrial (918 aa).

Positions 1–13 are enriched in low complexity; that stretch reads MASLSRALRVAAA. A mitochondrion-targeting transit peptide spans 1–22; sequence MASLSRALRVAAAHPRQSPTRG. Residues 1 to 40 are disordered; the sequence is MASLSRALRVAAAHPRQSPTRGMGPCNLSSAAGPTAEKSV. Lysine 38 carries the post-translational modification N6-succinyllysine. Histidine 108 carries the post-translational modification Tele-8alpha-FAD histidine. Lysine 173 bears the N6-acetyllysine; alternate mark. Lysine 173 carries the post-translational modification N6-succinyllysine; alternate. N6-succinyllysine occurs at positions 377 and 391. 2 positions are modified to N6-acetyllysine: lysine 559 and lysine 775. Tyrosine 777 carries the post-translational modification Phosphotyrosine. N6-acetyllysine; alternate occurs at positions 802, 884, and 904. Lysine 802, lysine 884, and lysine 904 each carry N6-succinyllysine; alternate.

The protein belongs to the GcvT family. FAD is required as a cofactor. In terms of tissue distribution, expressed in pancreas, liver and kidney.

The protein localises to the mitochondrion matrix. The catalysed reaction is (6S)-5,6,7,8-tetrahydrofolyl-(gamma-L-Glu)(n) + sarcosine + oxidized [electron-transfer flavoprotein] + H(+) = (6R)-5,10-methylenetetrahydrofolyl-(gamma-L-Glu)(n) + reduced [electron-transfer flavoprotein] + glycine. It participates in amine and polyamine degradation; sarcosine degradation; formaldehyde and glycine from sarcosine: step 1/1. In terms of biological role, catalyzes the last step of the oxidative degradation of choline to glycine. Converts sarcosine into glycine. The protein is Sarcosine dehydrogenase, mitochondrial of Homo sapiens (Human).